The chain runs to 638 residues: Protein disulfide-isomerase A4 (638 aa).

The first 20 residues, 1 to 20 (MKLRKAWLLVLLLALTQLLA), serve as a signal peptide directing secretion. Thioredoxin domains follow at residues 21 to 162 (AASA…EVSQ) and 162 to 294 (QPDW…EFLK). The segment at 24 to 50 (AGDAHEDTSDTENATEEEEEEDDDDLE) is disordered. Residues 32–50 (SDTENATEEEEEEDDDDLE) are compositionally biased toward acidic residues. N-linked (GlcNAc...) asparagine glycosylation occurs at asparagine 36. The short motif at 84–87 (CGHC) is the CXXC element. Cystine bridges form between cysteine 84–cysteine 87 and cysteine 199–cysteine 202. Residue lysine 359 is modified to N6-acetyllysine. Positions 498-629 (FKKGKLKPVI…LSKFIDEHAT (132 aa)) constitute a Thioredoxin 3 domain. Residues 548–551 (CGHC) carry the CXXC motif. Cysteines 548 and 551 form a disulfide. Residues 635–638 (KEEL) carry the Prevents secretion from ER motif.

This sequence belongs to the protein disulfide isomerase family. In terms of assembly, part of a large chaperone multiprotein complex comprising DNAJB11, HSP90B1, HSPA5, HYOU, PDIA2, PDIA4, PDIA6, PPIB, SDF2L1, UGGT1 and very small amounts of ERP29, but not, or at very low levels, CALR nor CANX. Component of a complex containing at least CRELD2, MANF, MATN3 and PDIA4.

The protein localises to the endoplasmic reticulum lumen. It is found in the melanosome. The enzyme catalyses Catalyzes the rearrangement of -S-S- bonds in proteins.. The chain is Protein disulfide-isomerase A4 (Pdia4) from Mus musculus (Mouse).